A 216-amino-acid chain; its full sequence is MVCVLVLAAAAGAVAVFLILRIWVVLRSMDVTPRESLSILVVAGSGGHTTEILRLLGSLSNAYSPRHYVIADTDEMSANKINSFELDRADRDPSNMYTKYYIHRIPRSREVQQSWPSTVFTTLHSMWLSFPLIHRVKPDLVLCNGPGTCVPICVSALLLGILGIKKVIIVYVESICRVETLSMSGKILFHLSDYFIVQWPALKEKYPKSVYLGRIV.

At 1–3 (MVC) the chain is on the lumenal side. Residues 4–24 (VLVLAAAAGAVAVFLILRIWV) form a helical membrane-spanning segment. Residues 25 to 216 (VLRSMDVTPR…PKSVYLGRIV (192 aa)) are Cytoplasmic-facing.

It belongs to the ALG14 family. Forms with ALG13 the active heterodimeric UDP-N-acetylglucosamine transferase complex.

Its subcellular location is the endoplasmic reticulum membrane. In terms of biological role, part of the UDP-N-acetylglucosamine transferase complex that operates in the biosynthetic pathway of dolichol-linked oligosaccharides, the glycan precursors employed in protein asparagine (N)-glycosylation. The assembly of dolichol-linked oligosaccharides begins on the cytosolic side of the endoplasmic reticulum membrane and finishes in its lumen. The sequential addition of sugars to dolichol pyrophosphate produces dolichol-linked oligosaccharides containing fourteen sugars, including two GlcNAcs, nine mannoses and three glucoses. Once assembled, the oligosaccharides are transferred from the lipid to nascent proteins by oligosaccharyltransferases. Functions as a protein-membrane adapter recruiting ALG13 at the cytoplasmic face of the endoplasmic reticulum, where the complex catalyzes the second step of dolichol pyrophosphate biosynthesis, transferring a beta1,4-linked N-acetylglucosamine (GlcNAc) from UDP-GlcNAc to GlcNAc-pyrophosphatedolichol (Gn-PDol) to produce N,N'-diacetylchitobiosyl diphosphodolichol. N,N'-diacetylchitobiosyl diphosphodolichol is a substrate for ALG1, the following enzyme in the biosynthetic pathway. This chain is UDP-N-acetylglucosamine transferase subunit ALG14, found in Homo sapiens (Human).